The following is a 69-amino-acid chain: UPF0346 protein llmg_2280 (69 aa).

Belongs to the UPF0346 family.

In Lactococcus lactis subsp. cremoris (strain MG1363), this protein is UPF0346 protein llmg_2280.